We begin with the raw amino-acid sequence, 795 residues long: Cyclin-dependent kinase 11B (795 aa).

The segment covering 17–60 (LQEKKRRKEQEEKAEIKRLKNSDDRDSKRDSLEEGELRDHRMEI) has biased composition (basic and acidic residues). Residues 17–412 (LQEKKRRKEQ…EGDYVPDSPA (396 aa)) form a disordered region. Phosphoserine is present on residues Ser47 and Ser72. Basic residues predominate over residues 95 to 113 (EKAHHRKDEKRKEKRRHRS). 4 stretches are compositionally biased toward basic and acidic residues: residues 114-131 (HSAEGGKHARVKEKEREH), 138-227 (REEQ…DKVK), 238-253 (PPRERFELGDGRKPGE), and 264-276 (QLKEEKMEERDLL). Ser115 carries the post-translational modification Phosphoserine. Ser283 bears the Phosphoserine mark. A compositionally biased stretch (low complexity) spans 291-302 (SAESSSAESGSG). 2 stretches are compositionally biased toward acidic residues: residues 303–364 (SEEE…EERE) and 383–392 (ESEEAEEEVG). A Protein kinase domain is found at 438-723 (FQCLNRIEEG…AEDGLKHEYF (286 aa)). Residues 444–452 (IEEGTYGVV) and Lys467 contribute to the ATP site. Position 482 is a phosphoserine; by CDK7 (Ser482). At Thr488 the chain carries Phosphothreonine; by CDK7. Residue Asp562 is the Proton acceptor of the active site. Position 589 is a phosphoserine (Ser589). Tyr594 carries the phosphotyrosine modification. Residue Thr595 is modified to Phosphothreonine. A Glycyl lysine isopeptide (Lys-Gly) (interchain with G-Cter in SUMO2) cross-link involves residue Lys641. A disordered region spans residues 733 to 795 (SMFPTWPAKS…AAGPGFSLKF (63 aa)). Phosphothreonine is present on Thr751. The residue at position 752 (Ser752) is a Phosphoserine.

Belongs to the protein kinase superfamily. CMGC Ser/Thr protein kinase family. CDC2/CDKX subfamily. As to quaternary structure, cleaved isoform SV9 (p110C) binds to the serine/threonine kinase PAK1 and RANBP9. p110C interacts with RNPS1. Isoform 7, but not isoform SV9, nor its cleavage product p110C, interacts with CCND3. Interacts with CCNL1 and CCNL2. Forms complexes with pre-mRNA-splicing factors, including at least SRSF1, SRSF2 and SRSF7/SLU7. Interacts with isoform 5 of MYO18A. In terms of assembly, (Microbial infection) Interacts with human herpes virus 1 (HHV-1) transcriptional regulator ICP22. Mg(2+) is required as a cofactor. During FAS- or TNF-induced apoptosis, isoform SV9 is cleaved by caspases to produce p110C, a fragment that contains the C-terminal kinase domain. In terms of processing, phosphorylation at Ser-115 creates a binding site for 14-3-3 proteins. p110C can be autophosphorylated. As to expression, expressed ubiquitously. Some evidence of isoform-specific tissue distribution.

The protein resides in the cytoplasm. The protein localises to the nucleus. The catalysed reaction is L-seryl-[protein] + ATP = O-phospho-L-seryl-[protein] + ADP + H(+). It catalyses the reaction L-threonyl-[protein] + ATP = O-phospho-L-threonyl-[protein] + ADP + H(+). Phosphorylation at Thr-448 or Tyr-449 inactivates the enzyme, while phosphorylation at Thr-595 activates it. Plays multiple roles in cell cycle progression, cytokinesis and apoptosis. Involved in pre-mRNA splicing in a kinase activity-dependent manner. Isoform 7 may act as a negative regulator of normal cell cycle progression. The protein is Cyclin-dependent kinase 11B (CDK11B) of Homo sapiens (Human).